The following is a 650-amino-acid chain: MQPWYHKLGRQGRQLAEQWQTDAEPWGVATPTPLDYLFDELTAPKPSTTPDKVLSYLAYYYPKLKNENNVELLTLCFLRCPLFFNDAQLVSFSDNYRVIECFKYIMDKKFQISQPTLPFYRFYNALFGALAKVVADSACAWKVVPVAVGCLLSVDSRNDYDRYPEHFQLIATVDAKLVDMAAHTLERSMDGPLSNDLLCLNVVALSCVQDKLVDSQLLRILRVRSDILKILTELTFNSPYGLDNGRLLTKSNANTPIVVRHLNRISFLFTKLTSIHPKIVLLADDLDLILNRIQTFSESVLSIPNPSETQWSTLRVVLFAQVMMFEGIMARFFQINNHSLNSTVLPTLCRKILTTLFNFNFVVDRIGTGGFESYNFVYASCLSTLTSYDIPTAETLIKCWTSSVAFKKVDNSATERGKLLFDLQFIENVVNLVSDSLKFEFIIPIVQDLIGNAQDQAVLESAHSVMLKYFTSVDTYNEAQLVDYTNNVKHVGAQLIDYLTLSLDQFPARLSLSQVGIIVETLAKITFPDTAVHECDPELYRELLLLVYNRCLVATSEELPNVQAPPKTRHGAFTSLLIRILPLIPFDEYQSWLERTLSLAFRTVGDERTYLLDLLWDSILGTNRHYPQKGYVGIQWWYEHVNESQEKAKL.

The short motif at Ala648 to Leu650 is the Microbody targeting signal element.

The protein localises to the peroxisome matrix. Its function is as follows. Essential for peroxisome biogenesis. May play a role in triggering the protein import competence of individual peroxisomes. It may interact with PEX10. The protein is Peroxisomal biogenesis factor 8 (PEX8) of Pichia angusta (Yeast).